Reading from the N-terminus, the 158-residue chain is Small ribosomal subunit protein uS15 (158 aa).

The span at 1-18 (MARMHARKRGKSGSKRPP) shows a compositional bias: basic residues. The interval 1–21 (MARMHARKRGKSGSKRPPRTA) is disordered.

It belongs to the universal ribosomal protein uS15 family. Part of the 30S ribosomal subunit.

This chain is Small ribosomal subunit protein uS15, found in Pyrococcus furiosus (strain ATCC 43587 / DSM 3638 / JCM 8422 / Vc1).